Consider the following 965-residue polypeptide: Isoleucine--tRNA ligase (965 aa).

The short motif at 68 to 78 (PYANGSLHMGH) is the 'HIGH' region element. L-isoleucyl-5'-AMP is bound at residue Glu-582. Residues 623 to 627 (KMSKS) carry the 'KMSKS' region motif. Lys-626 is a binding site for ATP. Residues Cys-936, Cys-939, Cys-956, and Cys-959 each coordinate Zn(2+).

Belongs to the class-I aminoacyl-tRNA synthetase family. IleS type 1 subfamily. In terms of assembly, monomer. The cofactor is Zn(2+).

The protein resides in the cytoplasm. The enzyme catalyses tRNA(Ile) + L-isoleucine + ATP = L-isoleucyl-tRNA(Ile) + AMP + diphosphate. Its function is as follows. Catalyzes the attachment of isoleucine to tRNA(Ile). As IleRS can inadvertently accommodate and process structurally similar amino acids such as valine, to avoid such errors it has two additional distinct tRNA(Ile)-dependent editing activities. One activity is designated as 'pretransfer' editing and involves the hydrolysis of activated Val-AMP. The other activity is designated 'posttransfer' editing and involves deacylation of mischarged Val-tRNA(Ile). The polypeptide is Isoleucine--tRNA ligase (Prochlorococcus marinus subsp. pastoris (strain CCMP1986 / NIES-2087 / MED4)).